Here is a 65-residue protein sequence, read N- to C-terminus: Small ribosomal subunit protein eS31 (65 aa).

Residues Cys36, Cys39, Cys55, and Cys58 each coordinate Zn(2+). The C4-type zinc-finger motif lies at 36–58 (CPKCGSVMAFHKEPVPRWHCGKC).

Belongs to the eukaryotic ribosomal protein eS31 family. Part of the 30S ribosomal subunit. The cofactor is Zn(2+).

In Pyrobaculum aerophilum (strain ATCC 51768 / DSM 7523 / JCM 9630 / CIP 104966 / NBRC 100827 / IM2), this protein is Small ribosomal subunit protein eS31.